A 685-amino-acid chain; its full sequence is Augmin complex subunit dgt5 (685 aa).

Coiled coils occupy residues 87–165 (LQRY…NKIQ) and 342–379 (NMRNFNRSQNEFLREQIEQLRLELDAGAKQLENHDLKL).

As to quaternary structure, component of the augmin complex composed of dgt2, dgt3, dgt4, dgt5, dgt6, msd1, msd5 and wac. The complex interacts directly or indirectly with microtubules and is required for centrosome-independent generation of spindle microtubules.

The protein resides in the cytoplasm. It localises to the cytoskeleton. Its subcellular location is the spindle. It is found in the chromosome. The protein localises to the centromere. The protein resides in the kinetochore. It localises to the microtubule organizing center. Its subcellular location is the centrosome. Functionally, as part of the augmin complex, plays a role in centrosome-independent generation of spindle microtubules. The complex is required for mitotic spindle assembly through its involvement in localizing gamma-tubulin to spindle microtubules. This is Augmin complex subunit dgt5 from Drosophila melanogaster (Fruit fly).